The chain runs to 223 residues: UPF0441 protein KPK_0672 (223 aa).

The segment at 165–223 (SYGAAQPGRTMNVPKTAMAPKPATTTTVTRGGFGESVAKQSTMQRSAAGSTSSSRSMGG) is disordered. Composition is skewed to low complexity over residues 177–193 (VPKT…TTVT) and 209–223 (RSAA…SMGG).

This sequence belongs to the UPF0441 family.

In Klebsiella pneumoniae (strain 342), this protein is UPF0441 protein KPK_0672.